Here is a 153-residue protein sequence, read N- to C-terminus: Pheromone-binding protein Gp-9 (153 aa).

The first 19 residues, 1-19 (MKTFVLHIFIFALVAFASA), serve as a signal peptide directing secretion. 3 disulfide bridges follow: Cys-37-Cys-77, Cys-73-Cys-129, and Cys-118-Cys-138.

Belongs to the PBP/GOBP family. In terms of assembly, homodimer.

It is found in the secreted. Its function is as follows. Colony queen number, a major feature of social organization, is associated with worker genotype for Gp-9. Colonies are headed by either a single reproductive queen (monogyne form) or multiple queens (polygyne form). Differences in worker Gp-9 genotypes between social forms may cause differences in workers' abilities to recognize queens and regulate their numbers. In Solenopsis daguerrei (Workerless parasitic ant), this protein is Pheromone-binding protein Gp-9.